The following is a 456-amino-acid chain: Chromosomal replication initiator protein DnaA (456 aa).

The interval 1–79 (MSQEIWADVL…QHPQVSFQVL (79 aa)) is domain I, interacts with DnaA modulators. The interval 79–112 (LPASQDALLLPSDPPPAPISPGRAPAPPPADNRK) is domain II. The segment at 89–112 (PSDPPPAPISPGRAPAPPPADNRK) is disordered. Over residues 90 to 108 (SDPPPAPISPGRAPAPPPA) the composition is skewed to pro residues. The segment at 113–329 (TLNPKYTFEN…GALMRVVAFS (217 aa)) is domain III, AAA+ region. ATP-binding residues include glycine 157, glycine 159, lysine 160, and threonine 161. The segment at 330–456 (SLNNVPFSRA…KGLEDEDSRA (127 aa)) is domain IV, binds dsDNA.

This sequence belongs to the DnaA family. In terms of assembly, oligomerizes as a right-handed, spiral filament on DNA at oriC.

The protein localises to the cytoplasm. Functionally, plays an essential role in the initiation and regulation of chromosomal replication. ATP-DnaA binds to the origin of replication (oriC) to initiate formation of the DNA replication initiation complex once per cell cycle. Binds the DnaA box (a 9 base pair repeat at the origin) and separates the double-stranded (ds)DNA. Forms a right-handed helical filament on oriC DNA; dsDNA binds to the exterior of the filament while single-stranded (ss)DNA is stabiized in the filament's interior. The ATP-DnaA-oriC complex binds and stabilizes one strand of the AT-rich DNA unwinding element (DUE), permitting loading of DNA polymerase. After initiation quickly degrades to an ADP-DnaA complex that is not apt for DNA replication. Binds acidic phospholipids. The polypeptide is Chromosomal replication initiator protein DnaA (Deinococcus deserti (strain DSM 17065 / CIP 109153 / LMG 22923 / VCD115)).